Reading from the N-terminus, the 144-residue chain is Putative pre-16S rRNA nuclease (144 aa).

Belongs to the YqgF nuclease family.

It is found in the cytoplasm. Functionally, could be a nuclease involved in processing of the 5'-end of pre-16S rRNA. The protein is Putative pre-16S rRNA nuclease of Picosynechococcus sp. (strain ATCC 27264 / PCC 7002 / PR-6) (Agmenellum quadruplicatum).